The primary structure comprises 370 residues: Queuine tRNA-ribosyltransferase (370 aa).

The active-site Proton acceptor is the aspartate 93. Residues aspartate 93–phenylalanine 97, aspartate 147, glutamine 189, and glycine 216 each bind substrate. The tract at residues glycine 247–cysteine 253 is RNA binding. Aspartate 266 acts as the Nucleophile in catalysis. Residues threonine 271–arginine 275 are RNA binding; important for wobble base 34 recognition. Residues cysteine 304, cysteine 306, cysteine 309, and histidine 335 each contribute to the Zn(2+) site.

This sequence belongs to the queuine tRNA-ribosyltransferase family. Homodimer. Within each dimer, one monomer is responsible for RNA recognition and catalysis, while the other monomer binds to the replacement base PreQ1. Zn(2+) serves as cofactor.

It catalyses the reaction 7-aminomethyl-7-carbaguanine + guanosine(34) in tRNA = 7-aminomethyl-7-carbaguanosine(34) in tRNA + guanine. It functions in the pathway tRNA modification; tRNA-queuosine biosynthesis. In terms of biological role, catalyzes the base-exchange of a guanine (G) residue with the queuine precursor 7-aminomethyl-7-deazaguanine (PreQ1) at position 34 (anticodon wobble position) in tRNAs with GU(N) anticodons (tRNA-Asp, -Asn, -His and -Tyr). Catalysis occurs through a double-displacement mechanism. The nucleophile active site attacks the C1' of nucleotide 34 to detach the guanine base from the RNA, forming a covalent enzyme-RNA intermediate. The proton acceptor active site deprotonates the incoming PreQ1, allowing a nucleophilic attack on the C1' of the ribose to form the product. After dissociation, two additional enzymatic reactions on the tRNA convert PreQ1 to queuine (Q), resulting in the hypermodified nucleoside queuosine (7-(((4,5-cis-dihydroxy-2-cyclopenten-1-yl)amino)methyl)-7-deazaguanosine). In Pelotomaculum thermopropionicum (strain DSM 13744 / JCM 10971 / SI), this protein is Queuine tRNA-ribosyltransferase.